The sequence spans 388 residues: tRNA-specific 2-thiouridylase MnmA (388 aa).

Residues Gly-26 to Ser-33 and Leu-52 each bind ATP. The Nucleophile role is filled by Cys-113. Cysteines 113 and 223 form a disulfide. Gly-138 contacts ATP. The tract at residues Lys-173–Gln-175 is interaction with tRNA. Catalysis depends on Cys-223, which acts as the Cysteine persulfide intermediate. Residues Arg-328–Tyr-329 are interaction with tRNA.

Belongs to the MnmA/TRMU family.

It is found in the cytoplasm. The catalysed reaction is S-sulfanyl-L-cysteinyl-[protein] + uridine(34) in tRNA + AH2 + ATP = 2-thiouridine(34) in tRNA + L-cysteinyl-[protein] + A + AMP + diphosphate + H(+). Catalyzes the 2-thiolation of uridine at the wobble position (U34) of tRNA, leading to the formation of s(2)U34. The polypeptide is tRNA-specific 2-thiouridylase MnmA (Prochlorococcus marinus (strain NATL2A)).